The following is a 396-amino-acid chain: Serine/threonine-protein kinase GRIK1 (396 aa).

The interval Glu-22–Ser-65 is disordered. Residues Gly-48 to Glu-60 show a composition bias toward acidic residues. Residues Phe-108–Ile-369 enclose the Protein kinase domain. ATP is bound by residues Ile-114 to Val-122 and Lys-137. A Phosphothreonine; by autocatalysis modification is found at Thr-154. The active-site Proton acceptor is Asp-239. The residue at position 261 (Ser-261) is a Phosphoserine; by KIN10.

The protein belongs to the protein kinase superfamily. Ser/Thr protein kinase family. As to quaternary structure, associates with the SNF1-related protein kinase (SnRK) complex. Interacts with AL1, a geminivirus (TGMV) protein essential for viral replication. In terms of tissue distribution, expressed in shoot apical meristem, leaf primordium and emerging petiole (at protein level).

It is found in the cytoplasm. The protein resides in the nucleus. The catalysed reaction is L-seryl-[protein] + ATP = O-phospho-L-seryl-[protein] + ADP + H(+). The enzyme catalyses L-threonyl-[protein] + ATP = O-phospho-L-threonyl-[protein] + ADP + H(+). Its activity is regulated as follows. Activated when autophosphorylated at Thr-154 and inactivated when phosphorylated at Ser-261 by SnRK1.1/KIN10. In terms of biological role, activates SnRK1.1/KIN10 and SnRK1.2/KIN11 by phosphorylation of their activation-loop 'Thr-198' and 'Thr-176', respectively. Required for the regulation by SnRK1 kinases of the transcription of a large set of genes, the modification the activity of metabolic enzymes, and the control of various nutrient-responsive cellular developmental processes. In Arabidopsis thaliana (Mouse-ear cress), this protein is Serine/threonine-protein kinase GRIK1 (GRIK1).